The primary structure comprises 318 residues: HPr kinase/phosphorylase (318 aa).

Active-site residues include His141 and Lys162. 156–163 (GDSAMGKS) contacts ATP. Ser163 contributes to the Mg(2+) binding site. The active-site Proton acceptor; for phosphorylation activity. Proton donor; for dephosphorylation activity is the Asp180. The interval 204–213 (LEVRGLGILN) is important for the catalytic mechanism of both phosphorylation and dephosphorylation. Glu205 serves as a coordination point for Mg(2+). The active site involves Arg248. The tract at residues 269-274 (PVAAGR) is important for the catalytic mechanism of dephosphorylation.

The protein belongs to the HPrK/P family. Homohexamer. Mg(2+) serves as cofactor.

It carries out the reaction [HPr protein]-L-serine + ATP = [HPr protein]-O-phospho-L-serine + ADP + H(+). The catalysed reaction is [HPr protein]-O-phospho-L-serine + phosphate + H(+) = [HPr protein]-L-serine + diphosphate. Its function is as follows. Catalyzes the ATP- as well as the pyrophosphate-dependent phosphorylation of a specific serine residue in HPr, a phosphocarrier protein of the phosphoenolpyruvate-dependent sugar phosphotransferase system (PTS). HprK/P also catalyzes the pyrophosphate-producing, inorganic phosphate-dependent dephosphorylation (phosphorolysis) of seryl-phosphorylated HPr (P-Ser-HPr). This Chromobacterium violaceum (strain ATCC 12472 / DSM 30191 / JCM 1249 / CCUG 213 / NBRC 12614 / NCIMB 9131 / NCTC 9757 / MK) protein is HPr kinase/phosphorylase.